Consider the following 129-residue polypeptide: Small ribosomal subunit protein eS6 (129 aa).

The tract at residues 106–129 (QINASIVSRGEQSIDDLLGGEDDE) is disordered.

The protein belongs to the eukaryotic ribosomal protein eS6 family.

The protein is Small ribosomal subunit protein eS6 of Natronomonas pharaonis (strain ATCC 35678 / DSM 2160 / CIP 103997 / JCM 8858 / NBRC 14720 / NCIMB 2260 / Gabara) (Halobacterium pharaonis).